Reading from the N-terminus, the 333-residue chain is MSATTLPNVSVAIIGAGIGGLTLGAFLRRLGIPFVILERTAVLTPLGAGISLAPNCLAALEQLGLYETIRQNAQELRGINVYREKRCWGTIDFGLAKQWFGYNVLSIERYEFHRYLYEAAGGAGVVQLGWDVARIEGLENADGDLRVISADGREVHTDIVVGADGIRSVTRRILSRSMGLQPENTIRFTGRVHMSGYTKPLSHLSTTDLGIGHWMLYNDCILTTWPCKENRQWFIGVKAAPPDEKSPDRSVWKGATSDTVNAVYGSRFHPFGEDGTVEASMYAIPAPAIAGNSRDDKLSIIPNASSLATSSRKPTSRTWFGAEWRSWVMVYRT.

The helical transmembrane segment at 6 to 26 threads the bilayer; the sequence is LPNVSVAIIGAGIGGLTLGAF. The FAD site is built by glutamate 38 and arginine 109. N-linked (GlcNAc...) asparagine glycosylation is present at asparagine 303.

The protein belongs to the paxM FAD-dependent monooxygenase family. FAD serves as cofactor.

The protein resides in the membrane. It functions in the pathway secondary metabolite biosynthesis. In terms of biological role, FAD-dependent monooxygenase; part of the gene cluster that mediates the biosynthesis of pyranterreones, a family of antioxidative compounds. The first step of pyranonigrins biosynthesis is performed by the hybrid PKS-NRPS synthetase pytA that condenses 4 malonyl-CoA units ato the acetyl starter unit by the modular PKS of pytA. The acyl chain is then connected to an L-serine through the amide bond by the modular NRPS of pytA. A tetramic acid is formed and released from the PKS-NRPS pytA to give pyranterreone 5 with the help of the thioesterase pytI. Pyranterreone 5 could be methylated by pytC to afford pyranterreone 6. Both pyranterreones 5 and 6 are subsequently oxidized by the FAD-linked oxidoreductase pytB and the cytochrome P450 monooxygenase pytD to form the fused gamma-pyrone core, resulting in pyranterreones 7 and 11, respectively. The hydroxy group at C-8 of pyranterreones 7 and 11 are dehydrated by the aspartyl protease pytH to form a delta-7 double bond to give pyranterreones 3 and 1, 2 accordingly. The exo-methylene of pyranterreone 3 could be reduced into a pendant methyl by reductase pytE to provide pyranterreone 4, also known as cordylactam. Pyranterreone 4 can be reconverted to pyranterreone 3 through pytB-catalyzed dehydrogenation or further oxidized to pyranterreones 9 and 10. This chain is FAD-dependent monooxygenase pytG, found in Aspergillus terreus (strain NIH 2624 / FGSC A1156).